The primary structure comprises 131 residues: Small ribosomal subunit protein uS8 (131 aa).

Belongs to the universal ribosomal protein uS8 family. In terms of assembly, part of the 30S ribosomal subunit. Contacts proteins S5 and S12.

Functionally, one of the primary rRNA binding proteins, it binds directly to 16S rRNA central domain where it helps coordinate assembly of the platform of the 30S subunit. This is Small ribosomal subunit protein uS8 from Delftia acidovorans (strain DSM 14801 / SPH-1).